A 1976-amino-acid polypeptide reads, in one-letter code: MAQRTGLEDPERYLFVDRAVIYNPATQADWTAKKLVWIPSERHGFEAASIKEERGDEVLVELAENGKKAMVNKDDIQKMNPPKFSKVEDMAELTCLNEASVLHNLKDRYYSGLIYTYSGLFCVVINPYKNLPIYSENIIEMYRGKKRHEMPPHIYAISESAYRCMLQDREDQSILCTGESGAGKTENTKKVIQYLAHVASSHKGRKDHNIPGELERQLLQANPILESFGNAKTVKNDNSSRFGKFIRINFDVTGYIVGANIETYLLEKSRAVRQAKDERTFHIFYQLLSGAGEHLKSDLLLEGFNNYRFLSNGYIPIPGQQDKDNFQETMEAMHIMGFSHEEILSMLKVVSSVLQFGNISFKKERNTDQASMPENTVAQKLCHLLGMNVMEFTRAILTPRIKVGRDYVQKAQTKEQADFAVEALAKATYERLFRWLVHRINKALDRTKRQGASFIGILDIAGFEIFELNSFEQLCINYTNEKLQQLFNHTMFILEQEEYQREGIEWNFIDFGLDLQPCIDLIERPANPPGVLALLDEECWFPKATDKTFVEKLVQEQGSHSKFQKPRQLKDKADFCIIHYAGKVDYKADEWLMKNMDPLNDNVATLLHQSSDRFVAELWKDVDRIVGLDQVTGMTETAFGSAYKTKKGMFRTVGQLYKESLTKLMATLRNTNPNFVRCIIPNHEKRAGKLDPHLVLDQLRCNGVLEGIRICRQGFPNRIVFQEFRQRYEILTPNAIPKGFMDGKQACERMIRALELDPNLYRIGQSKIFFRAGVLAHLEEERDLKITDIIIFFQAVCRGYLARKAFAKKQQQLSALKVLQRNCAAYLKLRHWQWWRVFTKVKPLLQVTRQEEELQAKDEELLKVKEKQTKVEGELEEMERKHQQLLEEKNILAEQLQAETELFAEAEEMRARLAAKKQELEEILHDLESRVEEEEERNQILQNEKKKMQAHIQDLEEQLDEEEGARQKLQLEKVTAEAKIKKMEEEILLLEDQNSKFIKEKKLMEDRIAECSSQLAEEEEKAKNLAKIRNKQEVMISDLEERLKKEEKTRQELEKAKRKLDGETTDLQDQIAELQAQIDELKIQVAKKEEELQGALARGDDETLHKNNALKVVRELQAQIAELQEDFESEKASRNKAEKQKRDLSEELEALKTELEDTLDTTAAQQELRTKREQEVAELKKALEEETKSHEAQIQDMRQRHATALEELSEQLEQAKRFKANLEKNKQGLETDNKELACEVKVLQQVKAESEHKRKKLDAQVQELHAKVSEGDRLRVELAEKANKLQNELDNVSTLLEEAEKKGIKFAKDAAGLESQLQDTQELLQEETRQKLNLSSRIRQLEEERSSLQEQQEEEEEARRSLEKQLQALQAQLTDTKKKVDDDLGTIENLEEAKKKLLKDVEVLSQRLEEKALAYDKLEKTKTRLQQELDDLLVDLDHQRQIVSNLEKKQKKFDQLLAEEKNISARYAEERDRAEAEAREKETKALSLARALEEALEAREEAERQNKQLRADMEDLMSSKDDVGKNVHELEKSKRALEQQVEEMRTQLEELEDELQATEDAKLRLEVNMQAMKAQFERDLQTRDEQNEEKKRLLIKQVRELEAELEDERKQRALAVASKKKMEIDLKDLEAQIEAANKARDEVIKQLRKLQAQMKDYQRELEEARASRDEIFAQSKESEKKLKSLEAEILQLQEELASSERARRHAEQERDELADEIANSASGKSALLDEKRRLEARIAQLEEELEEEQSNMELLNDRFRKTTLQVDTLNTELAAERSAAQKSDNARQQLERQNKELKAKLQELEGAVKSKFKATISALEAKIGQLEEQLEQEAKERAAANKLVRRTEKKLKEIFMQVEDERRHADQYKEQMEKANARMKQLKRQLEEAEEEATRANASRRKLQRELDDATEANEGLSREVSTLKNRLRRGGPISFSSSRSGRRQLHIEGASLELSDDDTESKTSDINETQPPQSE.

Arginine 18 is modified (omega-N-methylarginine). In terms of domain architecture, Myosin N-terminal SH3-like spans 31-81 (TAKKLVWIPSERHGFEAASIKEERGDEVLVELAENGKKAMVNKDDIQKMNP). The Myosin motor domain occupies 85–783 (SKVEDMAELT…VLAHLEEERD (699 aa)). Residue 178-185 (GESGAGKT) participates in ATP binding. Lysine 442 is subject to N6-acetyllysine. The segment at 661 to 683 (LTKLMATLRNTNPNFVRCIIPNH) is actin-binding. Residues 786–815 (ITDIIIFFQAVCRGYLARKAFAKKQQQLSA) enclose the IQ domain. A coiled-coil region spans residues 845-1976 (LQVTRQEEEL…INETQPPQSE (1132 aa)). The disordered stretch occupies residues 1126-1149 (DFESEKASRNKAEKQKRDLSEELE). The segment covering 1129-1149 (SEKASRNKAEKQKRDLSEELE) has biased composition (basic and acidic residues). Position 1145 is a phosphoserine (serine 1145). An N6-acetyllysine mark is found at lysine 1241, lysine 1301, and lysine 1645. 2 disordered regions span residues 1697-1718 (ASSE…DEIA) and 1874-1976 (KANA…PQSE). Over residues 1698–1708 (SSERARRHAEQ) the composition is skewed to basic and acidic residues. Arginine 1930 is modified (omega-N-methylarginine). Phosphoserine is present on residues serine 1935, serine 1937, serine 1938, and serine 1939. Arginine 1940 carries the post-translational modification Omega-N-methylarginine. Residues serine 1952 and serine 1956 each carry the phosphoserine modification. Threonine 1960 is modified (phosphothreonine). Positions 1967-1976 (INETQPPQSE) are enriched in polar residues. Serine 1975 is modified (phosphoserine).

It belongs to the TRAFAC class myosin-kinesin ATPase superfamily. Myosin family. As to quaternary structure, myosin is a hexameric protein that consists of 2 heavy chain subunits (MHC), 2 alkali light chain subunits (MLC) and 2 regulatory light chain subunits (MLC-2). Interacts with PLEKHG6. Interacts with ECPAS. Interacts with KIF26B. Interacts with LARP6. Interacts with MCC. Interacts with CFAP95. Post-translationally, phosphorylated by ABL2.

The protein resides in the cell projection. Its subcellular location is the lamellipodium. In terms of biological role, cellular myosin that appears to play a role in cytokinesis, cell shape, and specialized functions such as secretion and capping. Involved with LARP6 in the stabilization of type I collagen mRNAs for CO1A1 and CO1A2. During cell spreading, plays an important role in cytoskeleton reorganization, focal contacts formation (in the central part but not the margins of spreading cells), and lamellipodial extension; this function is mechanically antagonized by MYH9. The sequence is that of Myosin-10 (MYH10) from Bos taurus (Bovine).